A 52-amino-acid chain; its full sequence is Histone H2A (52 aa).

The disordered stretch occupies residues 1-25; it reads MSGRGKTGGKARAKAKTRSSRAGLQ. At S2 the chain carries N-acetylserine. At S2 the chain carries Phosphoserine. K6 is subject to N6-(2-hydroxyisobutyryl)lysine. N6-acetyllysine is present on K6. Over residues 7 to 19 the composition is skewed to basic residues; the sequence is TGGKARAKAKTRS. K10 is subject to N6-(2-hydroxyisobutyryl)lysine; alternate. K10 is subject to N6-lactoyllysine; alternate. The residue at position 10 (K10) is an N6-succinyllysine. Residues K14 and K16 each participate in a glycyl lysine isopeptide (Lys-Gly) (interchain with G-Cter in ubiquitin) cross-link. K37 carries the post-translational modification N6-(2-hydroxyisobutyryl)lysine; alternate.

In terms of assembly, the nucleosome is a histone octamer containing two molecules each of H2A, H2B, H3 and H4 assembled in one H3-H4 heterotetramer and two H2A-H2B heterodimers. The octamer wraps approximately 147 bp of DNA. In terms of processing, acetylation is not necessary for the antibacterial activity. Monoubiquitination in C-terminus gives a specific tag for epigenetic transcriptional repression. Following DNA double-strand breaks (DSBs), it is ubiquitinated through 'Lys-63' linkage of ubiquitin moieties, leading to the recruitment of repair proteins to sites of DNA damage. H2AK119Ub and ionizing radiation-induced 'Lys-63'-linked ubiquitination are distinct events. Post-translationally, phosphorylation on Ser-2 is enhanced during mitosis. Phosphorylation on Ser-2 directly represses transcription.

It localises to the nucleus. The protein resides in the chromosome. It is found in the secreted. Core component of nucleosome. Nucleosomes wrap and compact DNA into chromatin, limiting DNA accessibility to the cellular machineries which require DNA as a template. Histones thereby play a central role in transcription regulation, DNA repair, DNA replication and chromosomal stability. DNA accessibility is regulated via a complex set of post-translational modifications of histones, also called histone code, and nucleosome remodeling. Its function is as follows. Hipposin shows strong antimicrobial activity against several Gram-positive and Gram-negative bacteria. This is Histone H2A from Hippoglossus hippoglossus (Atlantic halibut).